The chain runs to 207 residues: Large ribosomal subunit protein uL4 (207 aa).

The disordered stretch occupies residues 49–78; that stretch reads HAVKNRSAVSGGGRKPWRQKGTGRARQGSI.

The protein belongs to the universal ribosomal protein uL4 family. In terms of assembly, part of the 50S ribosomal subunit.

In terms of biological role, one of the primary rRNA binding proteins, this protein initially binds near the 5'-end of the 23S rRNA. It is important during the early stages of 50S assembly. It makes multiple contacts with different domains of the 23S rRNA in the assembled 50S subunit and ribosome. Functionally, forms part of the polypeptide exit tunnel. This is Large ribosomal subunit protein uL4 from Streptococcus equi subsp. zooepidemicus (strain MGCS10565).